The chain runs to 103 residues: Large ribosomal subunit protein bL21 (103 aa).

It belongs to the bacterial ribosomal protein bL21 family. Part of the 50S ribosomal subunit. Contacts protein L20.

This protein binds to 23S rRNA in the presence of protein L20. The chain is Large ribosomal subunit protein bL21 from Nitrosospira multiformis (strain ATCC 25196 / NCIMB 11849 / C 71).